The sequence spans 153 residues: Antibacterial peptide PMAP-23 (153 aa).

The signal sequence occupies residues 1–29 (METQRASLCLGRWSLWLLLLGLVVPSASA). Q30 carries the pyrrolidone carboxylic acid modification. A propeptide spanning residues 30–130 (QALSYREAVL…DITCNQLQSV (101 aa)) is cleaved from the precursor. Residues 61-80 (DQPPKADEDPGTPKPVSFTV) are disordered. 2 disulfides stabilise this stretch: C85-C96 and C107-C124.

It belongs to the cathelicidin family.

Its subcellular location is the secreted. Exerts antimicrobial activity against both Gram-positive and negative bacteria at concentrations of 2-16 micro molar. Its activity appears to be mediated by its ability to damage bacterial membranes. The sequence is that of Antibacterial peptide PMAP-23 (PMAP23) from Sus scrofa (Pig).